A 417-amino-acid polypeptide reads, in one-letter code: Gamma-glutamyl phosphate reductase (417 aa).

The protein belongs to the gamma-glutamyl phosphate reductase family.

Its subcellular location is the cytoplasm. The catalysed reaction is L-glutamate 5-semialdehyde + phosphate + NADP(+) = L-glutamyl 5-phosphate + NADPH + H(+). The protein operates within amino-acid biosynthesis; L-proline biosynthesis; L-glutamate 5-semialdehyde from L-glutamate: step 2/2. Catalyzes the NADPH-dependent reduction of L-glutamate 5-phosphate into L-glutamate 5-semialdehyde and phosphate. The product spontaneously undergoes cyclization to form 1-pyrroline-5-carboxylate. This is Gamma-glutamyl phosphate reductase from Haemophilus influenzae (strain ATCC 51907 / DSM 11121 / KW20 / Rd).